A 212-amino-acid polypeptide reads, in one-letter code: Pyrrolidone-carboxylate peptidase (212 aa).

Residues Glu78, Cys141, and His165 contribute to the active site.

It belongs to the peptidase C15 family. Homotetramer.

Its subcellular location is the cytoplasm. The catalysed reaction is Release of an N-terminal pyroglutamyl group from a polypeptide, the second amino acid generally not being Pro.. Functionally, removes 5-oxoproline from various penultimate amino acid residues except L-proline. The sequence is that of Pyrrolidone-carboxylate peptidase from Staphylococcus aureus (strain NCTC 8325 / PS 47).